A 395-amino-acid polypeptide reads, in one-letter code: tRNA-specific 2-thiouridylase MnmA (395 aa).

Residues 6 to 13 and leucine 32 contribute to the ATP site; that span reads AMSGGVDS. Cysteine 101 functions as the Nucleophile in the catalytic mechanism. Cysteine 101 and cysteine 193 form a disulfide bridge. Glycine 125 is an ATP binding site. An interaction with tRNA region spans residues 143-145; that stretch reads KDQ. Cysteine 193 acts as the Cysteine persulfide intermediate in catalysis.

This sequence belongs to the MnmA/TRMU family.

It localises to the cytoplasm. It carries out the reaction S-sulfanyl-L-cysteinyl-[protein] + uridine(34) in tRNA + AH2 + ATP = 2-thiouridine(34) in tRNA + L-cysteinyl-[protein] + A + AMP + diphosphate + H(+). Catalyzes the 2-thiolation of uridine at the wobble position (U34) of tRNA, leading to the formation of s(2)U34. The polypeptide is tRNA-specific 2-thiouridylase MnmA (Corynebacterium jeikeium (strain K411)).